A 407-amino-acid chain; its full sequence is Phosphopentomutase (407 aa).

Positions 10, 306, 311, 347, 348, and 359 each coordinate Mn(2+).

The protein belongs to the phosphopentomutase family. Mn(2+) is required as a cofactor.

It is found in the cytoplasm. It catalyses the reaction 2-deoxy-alpha-D-ribose 1-phosphate = 2-deoxy-D-ribose 5-phosphate. It carries out the reaction alpha-D-ribose 1-phosphate = D-ribose 5-phosphate. It participates in carbohydrate degradation; 2-deoxy-D-ribose 1-phosphate degradation; D-glyceraldehyde 3-phosphate and acetaldehyde from 2-deoxy-alpha-D-ribose 1-phosphate: step 1/2. Functionally, isomerase that catalyzes the conversion of deoxy-ribose 1-phosphate (dRib-1-P) and ribose 1-phosphate (Rib-1-P) to deoxy-ribose 5-phosphate (dRib-5-P) and ribose 5-phosphate (Rib-5-P), respectively. This chain is Phosphopentomutase, found in Yersinia pseudotuberculosis serotype O:1b (strain IP 31758).